A 93-amino-acid polypeptide reads, in one-letter code: UPF0457 protein GTNG_2792 (93 aa).

It belongs to the UPF0457 family.

The polypeptide is UPF0457 protein GTNG_2792 (Geobacillus thermodenitrificans (strain NG80-2)).